The sequence spans 604 residues: Netrin-1 (604 aa).

An N-terminal signal peptide occupies residues 1–24; it reads MMRAVWEALAALAAVACLVGAVRG. A Laminin N-terminal domain is found at 47-284; the sequence is HPRRCIPDFV…AVSDLQVGGR (238 aa). Residues N95, N116, and N131 are each glycosylated (N-linked (GlcNAc...) asparagine). Intrachain disulfides connect C119–C152, C285–C294, C287–C304, C306–C315, C318–C338, C341–C350, C343–C368, C371–C380, C383–C401, C404–C416, C406–C423, C425–C434, C437–C451, C472–C544, and C491–C601. 3 Laminin EGF-like domains span residues 285–340, 341–403, and 404–453; these read CKCN…ECVA, CNCN…ACKA, and CDCH…PCIK. N417 carries an N-linked (GlcNAc...) asparagine glycan. In terms of domain architecture, NTR spans 472–601; that stretch reads CDSYCKASKG…FQQREKKGKC (130 aa). Positions 530–532 match the Cell attachment site motif; it reads RGD.

Binds to its receptors; DCC, UNC5A, UNC5B, UNC5C and probably UNC5D. Binds to its receptor; DSCAM. Interacts with DCC. Interacts with APP. Widely expressed in normal adult tissues with highest levels in heart, small intestine, colon, liver and prostate. Reduced expression in brain tumors and neuroblastomas. Expressed in epididymis (at protein level).

It localises to the secreted. It is found in the cytoplasm. Functionally, netrins control guidance of CNS commissural axons and peripheral motor axons. Its association with either DCC or some UNC5 receptors will lead to axon attraction or repulsion, respectively. Binding to UNC5C might cause dissociation of UNC5C from polymerized TUBB3 in microtubules and thereby lead to increased microtubule dynamics and axon repulsion. Involved in dorsal root ganglion axon projection towards the spinal cord. It also serves as a survival factor via its association with its receptors which prevent the initiation of apoptosis. Involved in tumorigenesis by regulating apoptosis. The sequence is that of Netrin-1 (NTN1) from Homo sapiens (Human).